A 355-amino-acid chain; its full sequence is Alanine racemase (355 aa).

Lys34 (proton acceptor; specific for D-alanine) is an active-site residue. The residue at position 34 (Lys34) is an N6-(pyridoxal phosphate)lysine. Arg133 serves as a coordination point for substrate. Tyr249 serves as the catalytic Proton acceptor; specific for L-alanine. Substrate is bound at residue Met297.

This sequence belongs to the alanine racemase family. Requires pyridoxal 5'-phosphate as cofactor.

The catalysed reaction is L-alanine = D-alanine. It functions in the pathway amino-acid biosynthesis; D-alanine biosynthesis; D-alanine from L-alanine: step 1/1. Functionally, catalyzes the interconversion of L-alanine and D-alanine. May also act on other amino acids. This Rickettsia akari (strain Hartford) protein is Alanine racemase (alr).